The sequence spans 79 residues: U-actitoxin-Avd9d (79 aa).

An N-terminal signal peptide occupies residues N1–A19. A propeptide spanning residues E20 to L37 is cleaved from the precursor. Residues C44–C79 form the ShKT domain. Disulfide bonds link C44–C79, C53–C72, and C62–C76. Positions K67–Y68 are crucial for binding to potassium channels.

This sequence belongs to the sea anemone type 1 potassium channel toxin family. Type 1b subfamily.

The protein resides in the secreted. Its subcellular location is the nematocyst. Functionally, inhibits voltage-gated potassium channels (Kv1/KCNA). The chain is U-actitoxin-Avd9d from Anemonia viridis (Snakelocks anemone).